Reading from the N-terminus, the 474-residue chain is Gasdermin-C (474 aa).

Positions 1 to 237 are triggers pyroptosis; sequence MLYTFDQVSK…TCAILLSANA (237 aa).

It belongs to the gasdermin family. In terms of assembly, homooligomer; homooligomeric ring-shaped pore complex containing 27-28 subunits when inserted in the membrane. In terms of processing, cleavage by CASP8 relieves autoinhibition by releasing the N-terminal moiety (Gasdermin-C, N-terminal) that initiates pyroptosis. Palmitoylated.

It is found in the cytoplasm. The protein resides in the cytosol. It localises to the cell membrane. The full-length protein before cleavage is inactive: intramolecular interactions between N- and C-terminal domains mediate autoinhibition in the absence of activation signal. The intrinsic pyroptosis-inducing activity is carried by the released N-terminal moiety (Gasdermin-C, N-terminal) following cleavage by caspase CASP8. Its function is as follows. This form constitutes the precursor of the pore-forming protein: upon cleavage, the released N-terminal moiety (Gasdermin-C, N-terminal) binds to membranes and forms pores, triggering pyroptosis. In terms of biological role, pore-forming protein that causes membrane permeabilization and pyroptosis. Produced by the cleavage of gasdermin-C by caspase CASP8 in response to death signals. After cleavage, moves to the plasma membrane where it strongly binds to membrane inner leaflet lipids. Homooligomerizes within the membrane and forms pores of 10-15 nanometers (nm) of inner diameter, triggering pyroptosis. The sequence is that of Gasdermin-C from Rattus norvegicus (Rat).